Reading from the N-terminus, the 704-residue chain is Glycogen [starch] synthase, liver (704 aa).

Serine 8 bears the Phosphoserine; by AMPK and PKA mark. Serine 11 is subject to Phosphoserine. Lysine 40 contacts UDP. 2 residues coordinate UDP-alpha-D-glucose: histidine 205 and arginine 211. Residues histidine 291, glutamate 292, glutamine 294, histidine 297, and lysine 301 each coordinate alpha-D-glucose 6-phosphate. Residue arginine 331 participates in UDP binding. Arginine 331 contacts UDP-alpha-D-glucose. Alpha-D-glucose 6-phosphate is bound at residue histidine 501. UDP-alpha-D-glucose is bound by residues glutamate 510, tryptophan 512, and glycine 513. Threonine 515 provides a ligand contact to UDP. Residues arginine 582 and arginine 586 each contribute to the alpha-D-glucose 6-phosphate site. The disordered stretch occupies residues 620-704 (KFHLEPTSPP…KKKLHGEYKN (85 aa)). Serine 627 is modified (phosphoserine). A phosphoserine; by GSK3-alpha and GSK3-beta mark is found at serine 641, serine 645, serine 649, and serine 653. Residues 647–657 (SGSQASSPQCS) are compositionally biased toward low complexity. Residue serine 657 is modified to Phosphoserine; by CK2. Positions 658-675 (DAEDEEDEDERYDEEEEA) are enriched in acidic residues. Serine 684 carries the post-translational modification Phosphoserine.

This sequence belongs to the glycosyltransferase 3 family. In terms of assembly, part of the glycogen synthase (GS)-glycogenin complex, a heterooctamer composed of a tetramer of GS and 2 dimers of glycogenin, where each GS protomer binds to one glycogenin subunit (via glycogenin C-terminus); the GS tetramer may dissociate from glycogenin dimers to continue glycogen polymerization on its own. May also form a heterooctamer complex with GYG1 (via GYG1 C-terminus). Phosphorylation reduces the activity towards UDP-alpha-D-glucose. Primed phosphorylation at Ser-657 (site 5) by CSNK2A1 and CSNK2A2 is required for inhibitory phosphorylation at Ser-641 (site 3a), Ser-645 (site 3b), Ser-649 (site 3c) and Ser-653 (site 4) by GSK3A an GSK3B. Dephosphorylation at Ser-641 and Ser-645 by PP1 activates the enzyme. Phosphorylation at Ser-8 is not required for interaction with GYG1. Interaction with GYG1 does not regulate the phosphorylation at Ser-8 and Ser-641. Specifically expressed in liver.

The enzyme catalyses [(1-&gt;4)-alpha-D-glucosyl](n) + UDP-alpha-D-glucose = [(1-&gt;4)-alpha-D-glucosyl](n+1) + UDP + H(+). It participates in glycan biosynthesis; glycogen biosynthesis. With respect to regulation, allosteric activation by glucose-6-phosphate. Phosphorylation reduces the activity towards UDP-glucose. When in the non-phosphorylated state, glycogen synthase does not require glucose-6-phosphate as an allosteric activator; when phosphorylated it does. Glycogen synthase participates in the glycogen biosynthetic process along with glycogenin and glycogen branching enzyme. Extends the primer composed of a few glucose units formed by glycogenin by adding new glucose units to it. In this context, glycogen synthase transfers the glycosyl residue from UDP-Glc to the non-reducing end of alpha-1,4-glucan. The sequence is that of Glycogen [starch] synthase, liver from Mus musculus (Mouse).